Consider the following 284-residue polypeptide: 2-dehydro-3-deoxyphosphooctonate aldolase (284 aa).

This sequence belongs to the KdsA family.

It is found in the cytoplasm. It carries out the reaction D-arabinose 5-phosphate + phosphoenolpyruvate + H2O = 3-deoxy-alpha-D-manno-2-octulosonate-8-phosphate + phosphate. It participates in carbohydrate biosynthesis; 3-deoxy-D-manno-octulosonate biosynthesis; 3-deoxy-D-manno-octulosonate from D-ribulose 5-phosphate: step 2/3. The protein operates within bacterial outer membrane biogenesis; lipopolysaccharide biosynthesis. The protein is 2-dehydro-3-deoxyphosphooctonate aldolase of Edwardsiella ictaluri (strain 93-146).